A 525-amino-acid chain; its full sequence is Histidine-rich glycoprotein (525 aa).

The N-terminal stretch at 1–18 is a signal peptide; that stretch reads MKALIAALLLITLQYSCA. 2 consecutive Cystatin domains span residues 19-136 and 137-254; these read VSPT…SALA and NTKD…NING. 5 disulfide bridges follow: Cys-24–Cys-504, Cys-78–Cys-89, Cys-105–Cys-126, Cys-203–Cys-417, and Cys-218–Cys-241. Residues 41–84 form an interaction with ATP5F1A region; the sequence is RRRDGYLFQLLRIADAHLDRVENTTVYYLVLDVQESDCSVLSRK. Asn-63 is a glycosylation site (N-linked (GlcNAc...) asparagine). An N-linked (GlcNAc...) asparagine glycan is attached at Asn-125. The tract at residues 252–407 is disordered; it reads INGVPPHLGH…GHHPHGHHPH (156 aa). Residues 284–293 are compositionally biased toward basic residues; that stretch reads RDHHHPHKPH. The span at 310–320 shows a compositional bias: pro residues; it reads PPLPQGPPPLL. A compositionally biased stretch (polar residues) spans 323–348; the sequence is SCSSCQHATFGTNGAQRHSHNNNSSD. N-linked (GlcNAc...) asparagine glycans are attached at residues Asn-344 and Asn-345. The tract at residues 348-382 is necessary for endothelial cell focal adhesions and anti-angiogenic activities; the sequence is DLHPHKHHSHEQHPHGHHPHAHHPHEHDTHRQHPH. 2 stretches are compositionally biased toward basic residues: residues 351 to 371 and 379 to 407; these read PHKH…AHHP and QHPH…HHPH.

Interacts (via the HRR domain) with TPM1; the interaction appears to contribute to the antiangiogenic properties of the HRR domain. Interacts with THBS2; the interaction blocks the antiangiogenic effect of THBS2 with CD36. Interacts with THBS1 (via the TSP type I repeats); the interaction blocks the antiangiogenic effect of THBS1 with CD3. Interacts with PLG (via its Kringle domains); the interaction tethers PLG to the cell surface and enhances its activation. Interacts with HPSE; the interaction is enhanced at acidic pH, partially inhibits binding of HPSE to cell surface receptors and modulates its enzymatic activity. Interacts (via the HRR domain) with TMP1; the interaction partially mediates the antiangiogenic properties of HRG. Interacts with kappa and lambda light chains of IgG molecules. Interacts with ATP5F1A; the interaction occurs on the surface of T-cells and alters their cell morphology in concert with CONA. Binds IgG molecules containing kappa and lambda light chains and inhibits the formation of insoluble immunoglobulin complexes. Interacts with F12; the interaction, which is enhanced in the presence of zinc ions and inhibited by heparin-binding to HRG, inhibits factor XII autoactivation and contact-initiated coagulation. Requires Zn(2+) as cofactor. In terms of processing, proteolytic cleavage produces several HRG fragments which are mostly disulfide-linked and, therefore, not released. Cleavage by plasmin is inhibited in the presence of heparin, zinc ions or in an acidic environment. Cleavage reduces binding of HRG to heparan sulfate, but enhances the ability of HRG to bind and tether plasminogen to the cell surface. On platelet activation, releases a 33 kDa antiangiogenic peptide which encompasses the HRR. Also cleaved in the C-terminal by plasmin. N-glycosylated. In terms of tissue distribution, expressed in macrophages and in malignant cells. Expressed by the liver and secreted in plasma (at protein level).

The protein resides in the secreted. Plasma glycoprotein that binds a number of ligands such as heme, heparin, heparan sulfate, thrombospondin, plasminogen, and divalent metal ions. Binds heparin and heparin/glycosaminoglycans in a zinc-dependent manner. Binds heparan sulfate on the surface of liver, lung, kidney and heart endothelial cells. Binds to N-sulfated polysaccharide chains on the surface of liver endothelial cells. Inhibits rosette formation. Acts as an adapter protein and is implicated in regulating many processes such as immune complex and pathogen clearance, cell chemotaxis, cell adhesion, angiogenesis, coagulation and fibrinolysis. Mediates clearance of necrotic cells through enhancing the phagocytosis of necrotic cells in a heparan sulfate-dependent pathway. This process can be regulated by the presence of certain HRG ligands such as heparin and zinc ions. Binds to IgG subclasses of immunoglobins containing kappa and lambda light chains with different affinities regulating their clearance and inhibiting the formation of insoluble immune complexes. Tethers plasminogen to the cell surface. Binds T-cells and alters the cell morphology. Modulates angiogenesis by blocking the CD6-mediated antiangiongenic effect of thrombospondins, THBS1 and THBS2. Acts as a regulator of the vascular endothelial growth factor (VEGF) signaling pathway; inhibits endothelial cell motility by reducing VEGF-induced complex formation between PXN/paxillin and ILK/integrin-linked protein kinase and by promoting inhibition of VEGF-induced tyrosine phosphorylation of focal adhesion kinases and alpha-actinins in endothelial cells. Also plays a role in the regulation of tumor angiogenesis and tumor immune surveillance. Normalizes tumor vessels and promotes antitumor immunity by polarizing tumor-associated macrophages, leading to decreased tumor growth and metastasis. This Homo sapiens (Human) protein is Histidine-rich glycoprotein (HRG).